Reading from the N-terminus, the 237-residue chain is MADS-box protein GGM13 (237 aa).

In terms of domain architecture, MADS-box spans 1-61 (MGRGKIEIKR…GKLFEYSSAS (61 aa)). Positions 84–174 (NQHLYCEMTR…CRLLAEQQAA (91 aa)) constitute a K-box domain.

As to expression, expression specific for female reproductive structures: strong at the adaxial base of the cupules, where ovules will later develop, then in the outermost cell layer of the nucellus, in the inner envelope, and in the inner half of the middle envelope at late stage of ovule development.

The protein resides in the nucleus. In terms of biological role, probable transcription factor. This chain is MADS-box protein GGM13 (GGM13), found in Gnetum gnemon (Spanish joint-fir).